Here is a 47-residue protein sequence, read N- to C-terminus: Gas vesicle protein A (47 aa).

This sequence belongs to the gas vesicle GvpA family. In terms of assembly, the gas vesicle shell is 2 nm thick and consists of a single layer of this protein. It forms helical ribs nearly perpendicular to the long axis of the vesicle.

Its subcellular location is the gas vesicle shell. In terms of biological role, gas vesicles are hollow, gas filled proteinaceous nanostructures found in some microorganisms. During planktonic growth they allow positioning of the organism at a favorable depth for light or nutrient acquisition. GvpA forms the protein shell. This is Gas vesicle protein A from Dactylococcopsis salina (Myxobaktron salinum).